A 357-amino-acid polypeptide reads, in one-letter code: Glycerol-3-phosphate dehydrogenase [NAD(P)+] (357 aa).

Residues Ser-30, Phe-31, Arg-51, and Lys-124 each coordinate NADPH. Sn-glycerol 3-phosphate is bound by residues Lys-124 and Gly-152. Residue Ala-156 participates in NADPH binding. 5 residues coordinate sn-glycerol 3-phosphate: Lys-207, Asp-260, Ser-270, Arg-271, and Asn-272. Lys-207 functions as the Proton acceptor in the catalytic mechanism. Arg-271 serves as a coordination point for NADPH. Position 297 (Glu-297) interacts with NADPH.

This sequence belongs to the NAD-dependent glycerol-3-phosphate dehydrogenase family.

The protein resides in the cytoplasm. The enzyme catalyses sn-glycerol 3-phosphate + NAD(+) = dihydroxyacetone phosphate + NADH + H(+). It catalyses the reaction sn-glycerol 3-phosphate + NADP(+) = dihydroxyacetone phosphate + NADPH + H(+). It participates in membrane lipid metabolism; glycerophospholipid metabolism. In terms of biological role, catalyzes the reduction of the glycolytic intermediate dihydroxyacetone phosphate (DHAP) to sn-glycerol 3-phosphate (G3P), the key precursor for phospholipid synthesis. The protein is Glycerol-3-phosphate dehydrogenase [NAD(P)+] of Acinetobacter baumannii (strain AB307-0294).